A 286-amino-acid chain; its full sequence is Sulfur carrier protein FdhD (286 aa).

Cysteine 110 serves as the catalytic Cysteine persulfide intermediate. 247–252 lines the Mo-bis(molybdopterin guanine dinucleotide) pocket; that stretch reads FARGEK.

Belongs to the FdhD family.

It localises to the cytoplasm. Required for formate dehydrogenase (FDH) activity. Acts as a sulfur carrier protein that transfers sulfur from IscS to the molybdenum cofactor prior to its insertion into FDH. The sequence is that of Sulfur carrier protein FdhD from Wolinella succinogenes (strain ATCC 29543 / DSM 1740 / CCUG 13145 / JCM 31913 / LMG 7466 / NCTC 11488 / FDC 602W) (Vibrio succinogenes).